Reading from the N-terminus, the 489-residue chain is Glutamate--tRNA ligase (489 aa).

Residues 10-20 (PSPTGFLHIGG) carry the 'HIGH' region motif. A 'KMSKS' region motif is present at residues 261-265 (KLSKR). An ATP-binding site is contributed by Lys-264.

The protein belongs to the class-I aminoacyl-tRNA synthetase family. Glutamate--tRNA ligase type 1 subfamily. As to quaternary structure, monomer.

It localises to the cytoplasm. The enzyme catalyses tRNA(Glu) + L-glutamate + ATP = L-glutamyl-tRNA(Glu) + AMP + diphosphate. Its function is as follows. Catalyzes the attachment of glutamate to tRNA(Glu) in a two-step reaction: glutamate is first activated by ATP to form Glu-AMP and then transferred to the acceptor end of tRNA(Glu). The protein is Glutamate--tRNA ligase of Finegoldia magna (strain ATCC 29328 / DSM 20472 / WAL 2508) (Peptostreptococcus magnus).